The primary structure comprises 830 residues: FYN-binding protein 1 (830 aa).

Residues 1–501 (MDGKTDVKSL…REKKEQELRK (501 aa)) form a disordered region. The residue at position 13 (Lys13) is an N6-acetyllysine. Polar residues predominate over residues 15–55 (NTGSNPTEEVSTSSRPFKVAGQNSPSGIQSKKNLFDNQGNA). Phosphoserine is present on residues Ser38 and Ser56. The span at 79–89 (TYEEKSEKEPK) shows a compositional bias: basic and acidic residues. Residue Ser233 is modified to Phosphoserine. Basic and acidic residues-rich tracts occupy residues 248-259 (PAKEDPEDKDHG) and 284-296 (NSEEKKEERKTDI). A Phosphoserine modification is found at Ser329. Residues 330–339 (QEKEGDKDSA) are compositionally biased toward basic and acidic residues. 2 stretches are compositionally biased toward pro residues: residues 344 to 362 (KPLPPLSVLGPPPSKPSRP) and 391 to 407 (LPPPPPTQPASQPPLPA). Residues 347–447 (PPLSVLGPPP…QDGVMHSDGT (101 aa)) are interaction with SKAP1. Positions 450–464 (LEEEQESDGEMYEDI) are enriched in acidic residues. Ser456 is modified (phosphoserine). Residues 461 to 464 (YEDI) carry the SH2-binding motif. The span at 465 to 500 (ESSKERDKKREKEEKKRLELERKEQKEREKKEQELR) shows a compositional bias: basic and acidic residues. Residues 465 to 502 (ESSKERDKKREKEEKKRLELERKEQKEREKKEQELRKK) adopt a coiled-coil conformation. The Nuclear localization signal signature appears at 479–486 (KKRLELER). Residues 510 to 571 (QVIHHAKACC…KTTAVKIDYD (62 aa)) form the SH3 1 domain. The residue at position 570 (Tyr570) is a Phosphotyrosine. Phosphoserine is present on Ser572. The SH2-binding; to LCP2 motif lies at 595 to 598 (YDDV). Disordered stretches follow at residues 601-646 (QDAP…DEKT) and 660-739 (KDER…EKEE). Residues 621 to 636 (ADDDIYDGIEEEDADD) are compositionally biased toward acidic residues. Residues 626–629 (YDGI) carry the SH2-binding; to FYN motif. The segment covering 660–675 (KDERKKSIREKPKVSE) has biased composition (basic and acidic residues). Residues 693 to 703 (VGEEVYDDVDA) are compositionally biased toward acidic residues. Position 698 is a phosphotyrosine (Tyr698). The span at 722–739 (TKAEEKDPKKLKKQEKEE) shows a compositional bias: basic and acidic residues. Positions 732 to 739 (LKKQEKEE) match the Nuclear localization signal motif. Residues 747–815 (KYDGEIRVLY…LRSYLVDNDG (69 aa)) form the SH3 2 domain.

As to quaternary structure, part of a complex consisting of SKAP2, FYB1 and PTPNS1. Part of a complex consisting of SKAP2, FYB1 and LILRB3. Part of a complex consisting of SKAP1, FYB1 and CLNK. Interacts with CLNK (via its SH2 domain) and FYN; this interaction allows SKAP1 and FYB1 to recruit FYN to the complex, thus promoting the phosphorylation of CLNK by FYN. Interacts with FYN. Interacts with LCP2. Interacts with SKAP1. Interacts with SKAP2. Interacts with FASLG. Interacts with EVL. Interacts with TMEM47. Interacts with LCK. In terms of processing, T-cell receptor ligation leads to increased tyrosine phosphorylation.

The protein localises to the cytoplasm. It localises to the nucleus. It is found in the cell junction. Functionally, acts as an adapter protein of the FYN and LCP2 signaling cascades in T-cells. May play a role in linking T-cell signaling to remodeling of the actin cytoskeleton. Modulates the expression of IL2. Involved in platelet activation. Prevents the degradation of SKAP1 and SKAP2. May be involved in high affinity immunoglobulin epsilon receptor signaling in mast cells. The protein is FYN-binding protein 1 of Rattus norvegicus (Rat).